We begin with the raw amino-acid sequence, 638 residues long: 1-deoxy-D-xylulose-5-phosphate synthase (638 aa).

Thiamine diphosphate contacts are provided by residues His-79 and 120-122 (GHS). Residue Asp-151 coordinates Mg(2+). Thiamine diphosphate contacts are provided by residues 152–153 (GA), Asn-182, Tyr-291, and Glu-373. Asn-182 is a Mg(2+) binding site.

The protein belongs to the transketolase family. DXPS subfamily. In terms of assembly, homodimer. The cofactor is Mg(2+). Thiamine diphosphate is required as a cofactor.

It carries out the reaction D-glyceraldehyde 3-phosphate + pyruvate + H(+) = 1-deoxy-D-xylulose 5-phosphate + CO2. The protein operates within metabolic intermediate biosynthesis; 1-deoxy-D-xylulose 5-phosphate biosynthesis; 1-deoxy-D-xylulose 5-phosphate from D-glyceraldehyde 3-phosphate and pyruvate: step 1/1. In terms of biological role, catalyzes the acyloin condensation reaction between C atoms 2 and 3 of pyruvate and glyceraldehyde 3-phosphate to yield 1-deoxy-D-xylulose-5-phosphate (DXP). The protein is 1-deoxy-D-xylulose-5-phosphate synthase of Xanthomonas campestris pv. campestris (strain 8004).